A 293-amino-acid chain; its full sequence is Acetyl-coenzyme A carboxylase carboxyl transferase subunit beta (293 aa).

The 265-residue stretch at 29-293 (LWVKCSECSQ…GVKELAEANI (265 aa)) folds into the CoA carboxyltransferase N-terminal domain. Zn(2+)-binding residues include Cys-33, Cys-36, Cys-52, and Cys-55. The C4-type zinc-finger motif lies at 33–55 (CSECSQVAYRKDLISNFNVCSNC).

It belongs to the AccD/PCCB family. As to quaternary structure, acetyl-CoA carboxylase is a heterohexamer composed of biotin carboxyl carrier protein (AccB), biotin carboxylase (AccC) and two subunits each of ACCase subunit alpha (AccA) and ACCase subunit beta (AccD). Zn(2+) is required as a cofactor.

The protein resides in the cytoplasm. It carries out the reaction N(6)-carboxybiotinyl-L-lysyl-[protein] + acetyl-CoA = N(6)-biotinyl-L-lysyl-[protein] + malonyl-CoA. Its pathway is lipid metabolism; malonyl-CoA biosynthesis; malonyl-CoA from acetyl-CoA: step 1/1. Component of the acetyl coenzyme A carboxylase (ACC) complex. Biotin carboxylase (BC) catalyzes the carboxylation of biotin on its carrier protein (BCCP) and then the CO(2) group is transferred by the transcarboxylase to acetyl-CoA to form malonyl-CoA. The protein is Acetyl-coenzyme A carboxylase carboxyl transferase subunit beta of Prochlorococcus marinus (strain MIT 9312).